Consider the following 337-residue polypeptide: Mitochondrial metalloendopeptidase OMA1 (337 aa).

The Mitochondrial matrix portion of the chain corresponds to 1-68 (MFLNKYISNY…QPNPRDKRFQ (68 aa)). Residues 69–89 (WIFGALIAGGGVYYFTHLEYV) traverse the membrane as a helical segment. Over 90–337 (PISNRRRFND…MLQSFKEVHW (248 aa)) the chain is Mitochondrial intermembrane. Position 195 (histidine 195) interacts with Zn(2+). Glutamate 196 is an active-site residue. Positions 199 and 250 each coordinate Zn(2+). Cysteine 265 and cysteine 321 are oxidised to a cystine.

This sequence belongs to the peptidase M48 family. It depends on Zn(2+) as a cofactor.

The protein resides in the mitochondrion inner membrane. Its activity is regulated as follows. Protease activity is induced in response to various mitochondrial stress. Its function is as follows. Protease that is part of the quality control system in the inner membrane of mitochondria. Cleaves and thereby promotes the turnover of mistranslated or misfolded membrane protein. The chain is Mitochondrial metalloendopeptidase OMA1 from Schizosaccharomyces pombe (strain 972 / ATCC 24843) (Fission yeast).